The following is a 203-amino-acid chain: bMERB domain-containing protein 1 (203 aa).

The bMERB domain maps to 3–149 (LKQSLSVHLE…EQEEDKEMAD (147 aa)). A disordered region spans residues 160–186 (KVTKSSASSRAEKKAEPPPSKPTVAKT).

In Rattus norvegicus (Rat), this protein is bMERB domain-containing protein 1 (Bmerb1).